Consider the following 147-residue polypeptide: uncharacterized protein (147 aa).

A helical transmembrane segment spans residues 13–35 (NSRINLLGILVLNVVCGKSSIFF).

It localises to the membrane. This is an uncharacterized protein from Saccharomyces cerevisiae (strain ATCC 204508 / S288c) (Baker's yeast).